A 333-amino-acid polypeptide reads, in one-letter code: Protein FAM170A (333 aa).

Disordered stretches follow at residues methionine 1–glutamate 45, leucine 73–lysine 107, and glutamate 143–proline 214. Residues leucine 10–histidine 29 show a composition bias toward basic and acidic residues. A compositionally biased stretch (low complexity) spans threonine 92–serine 105. The segment covering glutamate 143–glutamate 156 has biased composition (basic and acidic residues). Over residues serine 170–serine 179 the composition is skewed to polar residues. Over residues glycine 185 to serine 196 the composition is skewed to basic and acidic residues. Threonine 213 bears the Phosphothreonine mark. Residues phenylalanine 224–arginine 248 form a C2H2-type; degenerate zinc finger. A disordered region spans residues methionine 267 to serine 333. The span at serine 271–glutamate 281 shows a compositional bias: acidic residues. The segment covering glutamate 282–glutamate 293 has biased composition (basic and acidic residues). Serine 308 bears the Phosphoserine mark.

The protein belongs to the FAM170 family. Testis-specific.

It is found in the nucleus. Functionally, acts as a nuclear transcription factor that positively regulates the expression of heat shock genes. Binds to heat shock promoter elements (HSE). In Mus musculus (Mouse), this protein is Protein FAM170A (Fam170a).